The sequence spans 674 residues: uncharacterized protein (674 aa).

The N-terminal stretch at 1-24 (MKTLKALKIFIIVYISSVSLESFA) is a signal peptide. 2 helical membrane passes run 226–246 (IIGAALILYTMFFAFNMALNK) and 254–274 (ITLFIIKFLFVVYFSIGLEPL). The disordered stretch occupies residues 363–384 (GNGPGGNNKPIPNFDPDSKKDR). 4 helical membrane passes run 409 to 429 (IIILVAGIAFSVIFLSILLYF), 436 to 456 (CMITIYVMTYISPIFIPMVLF), 469 to 489 (VCISCALQPAVVAGFIALLIT), and 562 to 582 (VVSILAELLCVLVFSVIFYYF). The interval 624 to 674 (SSVHAQGKSPVEDKPDIGSKRKDGVQQGEDSENSSGGELADLASGSGGGKL) is disordered. Residues 633–647 (PVEDKPDIGSKRKDG) are compositionally biased toward basic and acidic residues.

Belongs to the TrbL/VirB6 family.

It localises to the cell membrane. This is an uncharacterized protein from Rickettsia typhi (strain ATCC VR-144 / Wilmington).